Here is a 418-residue protein sequence, read N- to C-terminus: MSKVDLNKETGPREVFCGLTSIVWLHRRMPDAFFLVVGSRTCAHLIQSAAGVMIFAEPRFGTAILEEKDLAGLADAHEELDRVVNDLISRRPEIKTLFLVGSCPSEVIKLDLATVAEKLNSRFLGQVRFVNYSGSGIETTFTQGEDGALKALVPLMESTDDEKLLLVGTLANNVEDRFKKIFNNIGITNVESFPPRQSTELPKIGKNTKVLLAQPYLSDTVRDLKHRGCGIIQAPFPLGVEGSTKWVLAAAAAFKIHELKVHEVIAPLANRARQAIEKHKEILRGKKLFLLPESQLEISLARFLHNECEMELIEVGTPYLNRDLMEEELNLLPDDTKIVEGQHVEKQLDRVRASNPDLVVCGMGLANPLEAEGISTKWSIEMVFSPIHGIDQAADLAGLFSRPLTRNQILTSKSLATH.

[4Fe-4S] cluster-binding residues include C17, C42, and C103.

It belongs to the BchN/ChlN family. Protochlorophyllide reductase is composed of three subunits; ChlL, ChlN and ChlB. Forms a heterotetramer of two ChlB and two ChlN subunits. The cofactor is [4Fe-4S] cluster.

The catalysed reaction is chlorophyllide a + oxidized 2[4Fe-4S]-[ferredoxin] + 2 ADP + 2 phosphate = protochlorophyllide a + reduced 2[4Fe-4S]-[ferredoxin] + 2 ATP + 2 H2O. Its pathway is porphyrin-containing compound metabolism; chlorophyll biosynthesis (light-independent). Component of the dark-operative protochlorophyllide reductase (DPOR) that uses Mg-ATP and reduced ferredoxin to reduce ring D of protochlorophyllide (Pchlide) to form chlorophyllide a (Chlide). This reaction is light-independent. The NB-protein (ChlN-ChlB) is the catalytic component of the complex. The chain is Light-independent protochlorophyllide reductase subunit N from Prochlorococcus marinus subsp. pastoris (strain CCMP1986 / NIES-2087 / MED4).